A 450-amino-acid polypeptide reads, in one-letter code: Molybdate-anion transporter (450 aa).

The next 12 membrane-spanning stretches (helical) occupy residues 1-21 (MLVT…GLEL), 38-58 (FLQF…ADWL), 79-99 (ILYV…SSLV), 128-148 (FVLL…FSAF), 167-187 (IPAT…AAGV), 191-211 (AVAS…IPLL), 249-269 (VLLL…FVFL), 278-298 (GAPL…GSSL), 311-331 (PMHL…MLTF), 344-364 (FIAF…MSFL), 376-396 (GVLN…LLVL), and 409-429 (FSIC…LFTV).

It belongs to the major facilitator superfamily.

It localises to the cell membrane. Mediates high-affinity intracellular uptake of the rare oligo-element molybdenum. The polypeptide is Molybdate-anion transporter (Mfsd5) (Mus musculus (Mouse)).